Reading from the N-terminus, the 203-residue chain is Small ribosomal subunit protein uS4 (203 aa).

The segment at L20–K44 is disordered. In terms of domain architecture, S4 RNA-binding spans M92–A155.

The protein belongs to the universal ribosomal protein uS4 family. In terms of assembly, part of the 30S ribosomal subunit. Contacts protein S5. The interaction surface between S4 and S5 is involved in control of translational fidelity.

Its function is as follows. One of the primary rRNA binding proteins, it binds directly to 16S rRNA where it nucleates assembly of the body of the 30S subunit. In terms of biological role, with S5 and S12 plays an important role in translational accuracy. In Synechococcus sp. (strain JA-2-3B'a(2-13)) (Cyanobacteria bacterium Yellowstone B-Prime), this protein is Small ribosomal subunit protein uS4.